Here is a 200-residue protein sequence, read N- to C-terminus: MPIGVPKVPFRLPGEEDAVWVDVYNRLYRERLLFLGQQVDDEIANQLIGIMMYLNSEDQAKDMYLYVNSPGGAVLAGISVYDAMQFVVPDVHTICMGLAASMGSFILAGGEITRRIALPHARVMIHQPASSYYDGQAGECVMEAEEVLKLRDCITKVYAQRTGKPLWLISEDMERDVFLSAEEAQDYGVVDLVAVENVSR.

S101 serves as the catalytic Nucleophile. H126 is an active-site residue.

Belongs to the peptidase S14 family. As to quaternary structure, component of the chloroplastic Clp protease core complex.

The protein localises to the plastid. It localises to the chloroplast stroma. The catalysed reaction is Hydrolysis of proteins to small peptides in the presence of ATP and magnesium. alpha-casein is the usual test substrate. In the absence of ATP, only oligopeptides shorter than five residues are hydrolyzed (such as succinyl-Leu-Tyr-|-NHMec, and Leu-Tyr-Leu-|-Tyr-Trp, in which cleavage of the -Tyr-|-Leu- and -Tyr-|-Trp bonds also occurs).. In terms of biological role, cleaves peptides in various proteins in a process that requires ATP hydrolysis. Has a chymotrypsin-like activity. Plays a major role in the degradation of misfolded proteins. This Adiantum capillus-veneris (Maidenhair fern) protein is ATP-dependent Clp protease proteolytic subunit.